We begin with the raw amino-acid sequence, 350 residues long: Secreted effector protein PipB2 (350 aa).

Pentapeptide repeat domains lie at 162–201 (ANLT…NLSG), 202–241 (ASLG…SLLG), 247–286 (CNCS…IMEG), and 287–326 (AVLT…TLTD).

Interacts with the host kinesin light chain (KLC), a subunit of the kinesin-1 motor complex.

The protein localises to the secreted. It is found in the host membrane. Functionally, effector proteins function to alter host cell physiology and promote bacterial survival in host tissues. Involved in the reorganization of late endosome/lysosome (LE/Lys) compartments in mammalian cells. Necessary and sufficient to link kinesin-1 onto the Salmonella-containing vacuole (SCV) membrane. Required for centrifugal extension of lysosomal glycoprotein-rich membrane tubules, known as Salmonella-induced filaments (Sifs), away from the SCV and toward the cell periphery. Required for virulence, but not for intracellular survival and replication in phagocytic cells. The sequence is that of Secreted effector protein PipB2 (pipB2) from Salmonella typhi.